The primary structure comprises 818 residues: Rho GTPase-activating protein 44 (818 aa).

The BAR domain maps to 14–249 (QTVGRAEKTE…IKAQQEAWVE (236 aa)). Positions 255–445 (KPLEEHLTIS…PIIQHADWFF (191 aa)) constitute a Rho-GAP domain. Disordered regions lie at residues 467-493 (ANYSSMPSPDMDPADRRQPEQARRPLS), 530-772 (SSAG…SMST), and 789-818 (TLRLSPLEHMRRHSVTDKRDSEEESESTAL). The span at 479-489 (PADRRQPEQAR) shows a compositional bias: basic and acidic residues. Serine 493 is subject to Phosphoserine. A compositionally biased stretch (low complexity) spans 563 to 579 (QPLDSPAAPALSPSGLG). A compositionally biased stretch (polar residues) spans 598–611 (GSAQKGSPGSSQGT). Composition is skewed to low complexity over residues 614 to 641 (AGTQPGAQPGAQPGASPSPSQPPADQSP) and 688 to 708 (SPYGLSYPQGYSLASGQLSPA). Residues 731–818 (KPRQRPTLPP…SEEESESTAL (88 aa)) are interaction with BST2. Residues 746 to 757 (VNLSASSPQSTE) are compositionally biased toward polar residues. A PDZ-binding motif is present at residues 764 to 767 (MSPG). Residues 794–809 (PLEHMRRHSVTDKRDS) are compositionally biased toward basic and acidic residues. Serine 809 carries the phosphoserine modification. The PDZ-binding signature appears at 815–818 (STAL).

As to quaternary structure, interacts with BST2 (via cytoplasmic domain). Interacts (probably via PDZ-binding motif) with SHANK3 (via PDZ domain); the interaction takes place in dendritic spines and promotes GRIA1 exocytosis. As to expression, highly expressed in brain. Expressed at weak level in other tissues.

The protein resides in the cell projection. It localises to the dendritic spine. The protein localises to the recycling endosome. Its subcellular location is the presynapse. It is found in the dendrite. GTPase-activating protein (GAP) that stimulates the GTPase activity of Rho-type GTPases. Thereby, controls Rho-type GTPases cycling between their active GTP-bound and inactive GDP-bound states. Acts as a GAP at least for CDC42 and RAC1. In neurons, is involved in dendritic spine formation and synaptic plasticity in a specific RAC1-GAP activity. Limits the initiation of exploratory dendritic filopodia. Recruited to actin-patches that seed filopodia, binds specifically to plasma membrane sections that are deformed inward by acto-myosin mediated contractile forces. Acts through GAP activity on RAC1 to reduce actin polymerization necessary for filopodia formation. In association with SHANK3, promotes GRIA1 exocytosis from recycling endosomes and spine morphological changes associated to long-term potentiation. This is Rho GTPase-activating protein 44 from Homo sapiens (Human).